Here is a 442-residue protein sequence, read N- to C-terminus: MASSAHSDSASADASAEIPAEILAPAPWSTPADDSEHLRITAVRTFLTAPQGCPYVIVRVETNQPGLYGLGCASDPQRTLAIRSVVDDYYAPMLLGRDPSDIEDLHRLLFNSGYWRGGSIGQNALAGVDVALWDIKGKVAGLPLHQLLGGRAREAADAYTHVDGDNAGEIAEKVLAAHERGYRHVRVQVSVPGTDTYGTAPRDAAEARRRELRAGSWDSLAYLRHVPPVLREIRERVGTGVELLHDAHERLTPSQARELVHEVEDARLFFLEDALAPEDAAHFDQLRAAGSVPLAVGELYHDVMMYLPLLQRQVIDFARIRIPTLGGLTPTRKLVAAVELFGARTAPHGPGDVSPVGMAANLGLDLSSPAFGVQEAATFREATREVFPGTPVPERGRFHGTGLPGLGVDFDEAAARKYPVPEPLRHDRWALLRNGDGSVQRP.

Histidine 161 provides a ligand contact to substrate. Tyrosine 197 acts as the Proton donor/acceptor in catalysis. Aspartate 246 serves as a coordination point for Mg(2+). Histidine 248 (proton donor/acceptor) is an active-site residue. Positions 272 and 298 each coordinate Mg(2+). 5 residues coordinate substrate: glutamate 298, arginine 319, histidine 348, aspartate 352, and glutamate 375.

This sequence belongs to the mandelate racemase/muconate lactonizing enzyme family. GalD subfamily. Mg(2+) is required as a cofactor.

It catalyses the reaction D-mannonate = 2-dehydro-3-deoxy-D-gluconate + H2O. Has low D-mannonate dehydratase activity (in vitro), suggesting that this is not a physiological substrate and that it has no significant role in D-mannonate degradation in vivo. Has no detectable activity with a panel of 70 other acid sugars (in vitro). The protein is D-galactonate dehydratase family member SSLG_02014 of Streptomyces sp. (strain SPB78).